The primary structure comprises 349 residues: Ribosomal RNA small subunit methyltransferase C (349 aa).

This sequence belongs to the methyltransferase superfamily. RsmC family. In terms of assembly, monomer.

It localises to the cytoplasm. It carries out the reaction guanosine(1207) in 16S rRNA + S-adenosyl-L-methionine = N(2)-methylguanosine(1207) in 16S rRNA + S-adenosyl-L-homocysteine + H(+). In terms of biological role, specifically methylates the guanine in position 1207 of 16S rRNA in the 30S particle. The protein is Ribosomal RNA small subunit methyltransferase C of Psychromonas ingrahamii (strain DSM 17664 / CCUG 51855 / 37).